The primary structure comprises 186 residues: Holliday junction branch migration complex subunit RuvA (186 aa).

The domain I stretch occupies residues 1–61 (MYSYIKGKVV…ENLQILYGFN (61 aa)). Residues 62 to 134 (DNKNLLFFKK…LKGDLIFSEK (73 aa)) form a domain II region. A flexible linker region spans residues 134-135 (KI). The domain III stretch occupies residues 136 to 186 (ILNPKKTELEKILLNLGFVKKEIKSVLNQIDDKKELELMLKEVLLKLAKNI).

This sequence belongs to the RuvA family. In terms of assembly, homotetramer. Forms an RuvA(8)-RuvB(12)-Holliday junction (HJ) complex. HJ DNA is sandwiched between 2 RuvA tetramers; dsDNA enters through RuvA and exits via RuvB. An RuvB hexamer assembles on each DNA strand where it exits the tetramer. Each RuvB hexamer is contacted by two RuvA subunits (via domain III) on 2 adjacent RuvB subunits; this complex drives branch migration. In the full resolvosome a probable DNA-RuvA(4)-RuvB(12)-RuvC(2) complex forms which resolves the HJ.

Its subcellular location is the cytoplasm. The RuvA-RuvB-RuvC complex processes Holliday junction (HJ) DNA during genetic recombination and DNA repair, while the RuvA-RuvB complex plays an important role in the rescue of blocked DNA replication forks via replication fork reversal (RFR). RuvA specifically binds to HJ cruciform DNA, conferring on it an open structure. The RuvB hexamer acts as an ATP-dependent pump, pulling dsDNA into and through the RuvAB complex. HJ branch migration allows RuvC to scan DNA until it finds its consensus sequence, where it cleaves and resolves the cruciform DNA. This is Holliday junction branch migration complex subunit RuvA from Phytoplasma mali (strain AT).